The sequence spans 156 residues: Small ribosomal subunit protein uS7 (156 aa).

It belongs to the universal ribosomal protein uS7 family. As to quaternary structure, part of the 30S ribosomal subunit. Contacts proteins S9 and S11.

Its function is as follows. One of the primary rRNA binding proteins, it binds directly to 16S rRNA where it nucleates assembly of the head domain of the 30S subunit. Is located at the subunit interface close to the decoding center, probably blocks exit of the E-site tRNA. The protein is Small ribosomal subunit protein uS7 of Prochlorococcus marinus (strain SARG / CCMP1375 / SS120).